The primary structure comprises 968 residues: RNA polymerase-associated protein RapA (968 aa).

One can recognise a Helicase ATP-binding domain in the interval 164–334 (DVGRRHAPRV…FARLRLLDPN (171 aa)). 177 to 184 (DEVGLGKT) is an ATP binding site. A DEAH box motif is present at residues 280–283 (DEAH). The 196-residue stretch at 490–685 (RVEWLMGYLT…ALKAQLEQGR (196 aa)) folds into the Helicase C-terminal domain.

Belongs to the SNF2/RAD54 helicase family. RapA subfamily. As to quaternary structure, interacts with the RNAP. Has a higher affinity for the core RNAP than for the holoenzyme. Its ATPase activity is stimulated by binding to RNAP.

Transcription regulator that activates transcription by stimulating RNA polymerase (RNAP) recycling in case of stress conditions such as supercoiled DNA or high salt concentrations. Probably acts by releasing the RNAP, when it is trapped or immobilized on tightly supercoiled DNA. Does not activate transcription on linear DNA. Probably not involved in DNA repair. In Salmonella typhimurium (strain LT2 / SGSC1412 / ATCC 700720), this protein is RNA polymerase-associated protein RapA.